The sequence spans 243 residues: Uridylate kinase (243 aa).

Lys-15–Gly-18 provides a ligand contact to ATP. Gly-57 is a binding site for UMP. ATP-binding residues include Gly-58 and Arg-62. Residues Asp-77 and Thr-138 to Thr-145 each bind UMP. ATP-binding residues include Thr-165, Phe-171, and Asp-174.

The protein belongs to the UMP kinase family. As to quaternary structure, homohexamer.

Its subcellular location is the cytoplasm. It carries out the reaction UMP + ATP = UDP + ADP. It participates in pyrimidine metabolism; CTP biosynthesis via de novo pathway; UDP from UMP (UMPK route): step 1/1. Inhibited by UTP. Functionally, catalyzes the reversible phosphorylation of UMP to UDP. This chain is Uridylate kinase, found in Blochmanniella floridana.